The following is an 86-amino-acid chain: MeuNaTxbeta-1 (86 aa).

The first 20 residues, Met1 to Thr20, serve as a signal peptide directing secretion. Residues Asp21–Asn83 enclose the LCN-type CS-alpha/beta domain. 4 cysteine pairs are disulfide-bonded: Cys32–Cys82, Cys36–Cys57, Cys43–Cys64, and Cys47–Cys66.

As to expression, expressed by the venom gland.

Its subcellular location is the secreted. In terms of biological role, inhibits sodium channels (Nav). Also moderately inhibits human calcium-activated potassium channel KCa1.1/KCNMA1/BK (41.9% decrease at 2 uM toxin concentration). Shows moderate antimicrobial activity against both Gram-positive and -negative bacteria. This Mesobuthus eupeus (Lesser Asian scorpion) protein is MeuNaTxbeta-1.